The primary structure comprises 177 residues: Ribosome maturation factor RimM (177 aa).

Residues 100 to 177 form the PRC barrel domain; it reads EDEYYWSDLV…TVLVAWPSDY (78 aa).

The protein belongs to the RimM family. In terms of assembly, binds ribosomal protein uS19.

It is found in the cytoplasm. Functionally, an accessory protein needed during the final step in the assembly of 30S ribosomal subunit, possibly for assembly of the head region. Essential for efficient processing of 16S rRNA. May be needed both before and after RbfA during the maturation of 16S rRNA. It has affinity for free ribosomal 30S subunits but not for 70S ribosomes. The polypeptide is Ribosome maturation factor RimM (Psychrobacter arcticus (strain DSM 17307 / VKM B-2377 / 273-4)).